A 408-amino-acid chain; its full sequence is Imidazolonepropionase (408 aa).

The Fe(3+) site is built by H73 and H75. Residues H73 and H75 each coordinate Zn(2+). Residues R82, Y145, and H178 each coordinate 4-imidazolone-5-propanoate. N-formimidoyl-L-glutamate is bound at residue Y145. H243 provides a ligand contact to Fe(3+). A Zn(2+)-binding site is contributed by H243. Residue Q246 participates in 4-imidazolone-5-propanoate binding. D318 provides a ligand contact to Fe(3+). D318 lines the Zn(2+) pocket. N-formimidoyl-L-glutamate-binding residues include N320 and G322. 4-imidazolone-5-propanoate is bound at residue S323.

It belongs to the metallo-dependent hydrolases superfamily. HutI family. Requires Zn(2+) as cofactor. Fe(3+) is required as a cofactor.

The protein localises to the cytoplasm. It carries out the reaction 4-imidazolone-5-propanoate + H2O = N-formimidoyl-L-glutamate. Its pathway is amino-acid degradation; L-histidine degradation into L-glutamate; N-formimidoyl-L-glutamate from L-histidine: step 3/3. Its function is as follows. Catalyzes the hydrolytic cleavage of the carbon-nitrogen bond in imidazolone-5-propanoate to yield N-formimidoyl-L-glutamate. It is the third step in the universal histidine degradation pathway. The polypeptide is Imidazolonepropionase (Shewanella oneidensis (strain ATCC 700550 / JCM 31522 / CIP 106686 / LMG 19005 / NCIMB 14063 / MR-1)).